The sequence spans 292 residues: 4-hydroxy-tetrahydrodipicolinate synthase (292 aa).

Residue T45 coordinates pyruvate. Y133 acts as the Proton donor/acceptor in catalysis. K161 acts as the Schiff-base intermediate with substrate in catalysis. A pyruvate-binding site is contributed by I203.

Belongs to the DapA family. In terms of assembly, homotetramer; dimer of dimers.

The protein resides in the cytoplasm. It carries out the reaction L-aspartate 4-semialdehyde + pyruvate = (2S,4S)-4-hydroxy-2,3,4,5-tetrahydrodipicolinate + H2O + H(+). It functions in the pathway amino-acid biosynthesis; L-lysine biosynthesis via DAP pathway; (S)-tetrahydrodipicolinate from L-aspartate: step 3/4. Catalyzes the condensation of (S)-aspartate-beta-semialdehyde [(S)-ASA] and pyruvate to 4-hydroxy-tetrahydrodipicolinate (HTPA). This chain is 4-hydroxy-tetrahydrodipicolinate synthase, found in Salmonella typhi.